A 488-amino-acid polypeptide reads, in one-letter code: UDP-glycosyltransferase 92A1 (488 aa).

UDP-alpha-D-glucose contacts are provided by residues S292, 358–360, 375–383, and 397–400; these read APQ, HCGWNSILE, and AAEQ.

This sequence belongs to the UDP-glycosyltransferase family.

The polypeptide is UDP-glycosyltransferase 92A1 (UGT92A1) (Arabidopsis thaliana (Mouse-ear cress)).